The primary structure comprises 636 residues: Asparagine synthetase domain-containing protein 1 (636 aa).

Cysteine 2 functions as the Nucleophile in the catalytic mechanism. The Glutamine amidotransferase type-2 domain maps to 2–187; the sequence is CGICCVVALS…ASGIFKMDLR (186 aa). Residues 291–607 enclose the Asparagine synthetase domain; sequence QFIDVLDEAV…GLEAASILPK (317 aa).

The chain is Asparagine synthetase domain-containing protein 1 (ASNSD1) from Gallus gallus (Chicken).